Reading from the N-terminus, the 910-residue chain is DNA repair and recombination protein RAD54B (910 aa).

Polar residues predominate over residues 1–14 (MRRSAAPSQLQGNS). The tract at residues 1-33 (MRRSAAPSQLQGNSFKKPKFIPPGRSNPGLNEE) is disordered. S14 is modified (phosphoserine). A Helicase ATP-binding domain is found at 313–480 (GMRMNGRCGA…FALIDFVNPG (168 aa)). Position 326-333 (326-333 (DEMGLGKT)) interacts with ATP. A DEGH box motif is present at residues 431-434 (DEGH). Positions 649–810 (KLLAVIHELR…HIQFSVEELK (162 aa)) constitute a Helicase C-terminal domain.

Belongs to the SNF2/RAD54 helicase family. As to quaternary structure, interacts with RAD51 through the NH2-terminal domain. Immunoprecipitation experiments show that the interaction is constitutive and not induced by ionizing radiation. The interaction may be indirect. In terms of tissue distribution, abundantly expressed in testis and spleen. Relatively low levels observed in thymus, prostate, ovary and colon.

The protein localises to the nucleus. Functionally, involved in DNA repair and mitotic recombination. May play an active role in recombination processes in concert with other members of the RAD52 epistasis group. This is DNA repair and recombination protein RAD54B (RAD54B) from Homo sapiens (Human).